A 93-amino-acid chain; its full sequence is YcgL domain-containing protein KPN78578_22820 (93 aa).

The YcgL domain maps to 1-85 (MFCVIYRSTK…PSENLLKKHL (85 aa)).

This chain is YcgL domain-containing protein KPN78578_22820, found in Klebsiella pneumoniae subsp. pneumoniae (strain ATCC 700721 / MGH 78578).